The primary structure comprises 164 residues: C-phycoerythrin class 1 subunit alpha (164 aa).

The (2R,3E)-phycoerythrobilin site is built by C82 and C139.

This sequence belongs to the phycobiliprotein family. As to quaternary structure, heterodimer of an alpha and a beta chain. Contains two covalently linked phycoerythrobilin chromophores.

The protein localises to the cellular thylakoid membrane. Light-harvesting photosynthetic bile pigment-protein from the phycobiliprotein complex. In Synechococcus sp. (strain WH8020), this protein is C-phycoerythrin class 1 subunit alpha (cpeA).